The chain runs to 383 residues: Probable cell wall hydrolase LytN (383 aa).

An N-terminal signal peptide occupies residues 1–49 (MFVYYCKECFIMNKQQSKVRYSIRKVSIGILSISIGMFLALGMSNKAYA). In terms of domain architecture, LysM spans 175–219 (QIYTVKKGDTLSAIALKYKTTVSNIQNTNNIANPNLIFIGQKLKV). One can recognise a Peptidase C51 domain in the interval 241–378 (NSSTLNYLKT…NYENDMIFIR (138 aa)).

Its subcellular location is the secreted. In terms of biological role, probably involved in peptidoglycan hydrolysis. This is Probable cell wall hydrolase LytN (lytN) from Staphylococcus aureus (strain NCTC 8325 / PS 47).